A 272-amino-acid chain; its full sequence is Ribosomal RNA small subunit methyltransferase A (272 aa).

Residues His11, Leu13, Gly38, Glu59, Asp84, and Asn109 each contribute to the S-adenosyl-L-methionine site.

It belongs to the class I-like SAM-binding methyltransferase superfamily. rRNA adenine N(6)-methyltransferase family. RsmA subfamily.

The protein resides in the cytoplasm. It carries out the reaction adenosine(1518)/adenosine(1519) in 16S rRNA + 4 S-adenosyl-L-methionine = N(6)-dimethyladenosine(1518)/N(6)-dimethyladenosine(1519) in 16S rRNA + 4 S-adenosyl-L-homocysteine + 4 H(+). In terms of biological role, specifically dimethylates two adjacent adenosines (A1518 and A1519) in the loop of a conserved hairpin near the 3'-end of 16S rRNA in the 30S particle. May play a critical role in biogenesis of 30S subunits. This is Ribosomal RNA small subunit methyltransferase A from Rippkaea orientalis (strain PCC 8801 / RF-1) (Cyanothece sp. (strain PCC 8801)).